Reading from the N-terminus, the 830-residue chain is Periplasmic nitrate reductase (830 aa).

Residues 1–32 (MELNRRDFMKANAAVAAAAAAGITIPVKNVHA) constitute a signal peptide (tat-type signal). The 4Fe-4S Mo/W bis-MGD-type domain maps to 39–95 (IRWDKAPCRYCGTGCSVLVGTKDGRVVATQGDPDAEVNRGLNCIKGYFLSKIMYGAD). [4Fe-4S] cluster is bound by residues cysteine 46, cysteine 49, cysteine 53, and cysteine 81. Mo-bis(molybdopterin guanine dinucleotide) is bound by residues lysine 83, glutamine 151, asparagine 176, cysteine 180, 213–220 (WGSNMAEM), 244–248 (STFEH), methionine 374, glutamine 378, asparagine 484, 510–511 (SD), lysine 533, aspartate 560, and 720–729 (TGRVLEHWHT). Phenylalanine 796 lines the substrate pocket. Residues asparagine 804 and lysine 821 each coordinate Mo-bis(molybdopterin guanine dinucleotide).

It belongs to the prokaryotic molybdopterin-containing oxidoreductase family. NasA/NapA/NarB subfamily. As to quaternary structure, component of the periplasmic nitrate reductase NapAB complex composed of NapA and NapB. It depends on [4Fe-4S] cluster as a cofactor. Mo-bis(molybdopterin guanine dinucleotide) is required as a cofactor. Post-translationally, predicted to be exported by the Tat system. The position of the signal peptide cleavage has not been experimentally proven.

It is found in the periplasm. The catalysed reaction is 2 Fe(II)-[cytochrome] + nitrate + 2 H(+) = 2 Fe(III)-[cytochrome] + nitrite + H2O. In terms of biological role, catalytic subunit of the periplasmic nitrate reductase complex NapAB. Receives electrons from NapB and catalyzes the reduction of nitrate to nitrite. The protein is Periplasmic nitrate reductase of Mannheimia succiniciproducens (strain KCTC 0769BP / MBEL55E).